Here is a 193-residue protein sequence, read N- to C-terminus: MLLLASASPARLRLLELAQIPHRVRVSGVDESSIENHDPALLVQQLALAKATAVSDGIDADISSVLGCDSLLLFEGEVFGKPQDGEEAAARWRRMAGGSGELLTGHALLVRSGENRLACISTRVHFAAITEEEIQAYVTTGEPLHCAGGFALEGRGASLIAGLEGCYSNVIGLSLPWLRSVLRDSKMDQSASG.

The active-site Proton acceptor is the aspartate 69.

This sequence belongs to the Maf family. A divalent metal cation serves as cofactor.

The protein resides in the cytoplasm. It catalyses the reaction a ribonucleoside 5'-triphosphate + H2O = a ribonucleoside 5'-phosphate + diphosphate + H(+). The catalysed reaction is a 2'-deoxyribonucleoside 5'-triphosphate + H2O = a 2'-deoxyribonucleoside 5'-phosphate + diphosphate + H(+). Functionally, nucleoside triphosphate pyrophosphatase. May have a dual role in cell division arrest and in preventing the incorporation of modified nucleotides into cellular nucleic acids. The protein is Nucleoside triphosphate pyrophosphatase of Parasynechococcus marenigrum (strain WH8102).